Here is a 466-residue protein sequence, read N- to C-terminus: Zinc finger protein NUTCRACKER (466 aa).

The span at 1–23 (MTSEVLQTISSGSGFAQPQSSST) shows a compositional bias: polar residues. Positions 1 to 29 (MTSEVLQTISSGSGFAQPQSSSTLDHDES) are disordered. Ser56 carries the post-translational modification Phosphoserine. The segment at 66–88 (FLCEVCGKGFQRDQNLQLHRRGH) adopts a C2H2-type 1 zinc-finger fold. Thr98 carries the post-translational modification Phosphothreonine; by KIN10. Residues 107 to 137 (YVCPEKTCVHHHSSRALGDLTGIKKHFCRKH) form a C2H2-type 2 zinc finger. Positions 134 to 141 (CRKHGEKK) match the Nuclear localization signal motif. The C2H2-type 2; degenerate zinc-finger motif lies at 142 to 165 (WTCEKCAKRYAVQSDWKAHSKTCG). The Zn(2+) site is built by Cys144, Cys147, His160, Cys164, Cys171, and Cys173. The CCHC-type 2; atypical zinc-finger motif lies at 169–192 (YRCDCGTIFSRRDSFITHRAFCDA). Phosphoserine; by KIN10 occurs at positions 178 and 182. The tract at residues 179–191 (RRDSFITHRAFCD) is SHR-binding. Positions 186 and 190 each coordinate Zn(2+).

As to quaternary structure, interacts with AKIN10. Post-translationally, inhibition of transcription factor activity by KIN10-mediated phosphorylation at Thr-98, Ser-178 and Ser-182 under sugar deprivation conditions, thus delaying flowering. Highly expressed in vegetative organs and at lower levels in flowers and siliques. Expressed predominantly in roots. In roots, present in cortex, endodermis, and pericycle layer.

The protein resides in the nucleus. Its function is as follows. Transcription activator that binds to the DNA sequence 5'-CTTTTGTCC-3'. Regulates photoperiodic flowering by modulating sugar transport and metabolism. Regulates SUS1 and SUS4. Transcription factor that regulates tissue boundaries and asymmetric cell division. Contributes to the sequestration of 'SHORT-ROOT' to the nucleus. In Arabidopsis thaliana (Mouse-ear cress), this protein is Zinc finger protein NUTCRACKER.